Consider the following 333-residue polypeptide: Cell shape-determining protein Mbl (333 aa).

Residues 12–14 (TAN), 156–158 (GGT), 204–207 (EDIK), and 284–287 (GGAL) contribute to the ATP site.

It belongs to the FtsA/MreB family. As to quaternary structure, forms polymers.

It localises to the cytoplasm. In terms of biological role, forms membrane-associated dynamic filaments that are essential for cell shape determination. Acts by regulating cell wall synthesis and cell elongation, and thus cell shape. A feedback loop between cell geometry and Mbl localization may maintain elongated cell shape by targeting cell wall growth to regions of negative cell wall curvature. In Bacillus cereus (strain ATCC 10987 / NRS 248), this protein is Cell shape-determining protein Mbl.